The following is a 471-amino-acid chain: Putative multidrug resistance protein MdtD (471 aa).

Over 1-11 (MTDLPDSTRWQ) the chain is Periplasmic. The chain crosses the membrane as a helical span at residues 12–32 (LWIVAFGFFMQSLDTTIVNTA). Topologically, residues 33–48 (LPSMAQSLGESPLHMH) are cytoplasmic. The chain crosses the membrane as a helical span at residues 49–69 (MVIVSYVLTVAVMLPASGWLA). The Periplasmic segment spans residues 70–76 (DKVGVRN). A helical membrane pass occupies residues 77–97 (IFFTAIVLFTLGSLFCALSGT). At 98-101 (LNEL) the chain is on the cytoplasmic side. Residues 102 to 124 (LLARALQGVGGAMMVPVGRLTVM) traverse the membrane as a helical segment. Residues 125–137 (KIVPREQYMAAMT) lie on the Periplasmic side of the membrane. Residues 138–158 (FVTLPGQVGPLLGPALGGLLV) form a helical membrane-spanning segment. At 159 to 164 (EYASWH) the chain is on the cytoplasmic side. The helical transmembrane segment at 165–185 (WIFLINIPVGIIGAIATLMLM) threads the bilayer. At 186–196 (PNYTMQTRRFD) the chain is on the periplasmic side. The helical transmembrane segment at 197–217 (LSGFLLLAVGMAVLTLALDGS) threads the bilayer. At 218–224 (KGTGLSP) the chain is on the cytoplasmic side. Residues 225 to 245 (LAIAGLVAVGVVALVLYLLHA) form a helical membrane-spanning segment. Residues 246–262 (RNNNRALFSLKLFRTRT) are Periplasmic-facing. Residues 263-283 (FSLGLAGSFAGRIGSGMLPFM) form a helical membrane-spanning segment. Residues 284-285 (TP) are Cytoplasmic-facing. A helical transmembrane segment spans residues 286 to 306 (VFLQIGLGFSPFHAGLMMIPM). At 307-341 (VLGSMGMKRIVVQVVNRFGYRRVLVATTLGLSLVT) the chain is on the periplasmic side. The helical transmembrane segment at 342-362 (LLFMTTALLGWYYVLPFVLFL) threads the bilayer. Topologically, residues 363–395 (QGMVNSTRFSSMNTLTLKDLPDNLASSGNSLLS) are cytoplasmic. Residues 396–416 (MIMQLSMSIGVTIAGLLLGLF) traverse the membrane as a helical segment. The Periplasmic segment spans residues 417–430 (GSQHVSVDSGTTQT). Residues 431 to 451 (VFMYTWLSMAFIIALPAFIFA) form a helical membrane-spanning segment. Residues 452 to 471 (RVPNDTHQNVAISRRKRSAQ) lie on the Cytoplasmic side of the membrane.

Belongs to the major facilitator superfamily. TCR/Tet family.

It is found in the cell inner membrane. The polypeptide is Putative multidrug resistance protein MdtD (Escherichia coli (strain SMS-3-5 / SECEC)).